Here is a 387-residue protein sequence, read N- to C-terminus: Dual specificity mitogen-activated protein kinase kinase mek-2 (387 aa).

Residues M1–P37 form a disordered region. Residues P16–G25 show a composition bias toward polar residues. Residues E26–T35 are compositionally biased toward low complexity. One can recognise a Protein kinase domain in the interval L73–F360. ATP contacts are provided by residues L79–V87 and K102. D195 acts as the Proton acceptor in catalysis. A phosphoserine mark is found at S223 and S227.

It belongs to the protein kinase superfamily. STE Ser/Thr protein kinase family. MAP kinase kinase subfamily. Interacts with ksr-1.

The catalysed reaction is L-seryl-[protein] + ATP = O-phospho-L-seryl-[protein] + ADP + H(+). The enzyme catalyses L-threonyl-[protein] + ATP = O-phospho-L-threonyl-[protein] + ADP + H(+). It carries out the reaction L-tyrosyl-[protein] + ATP = O-phospho-L-tyrosyl-[protein] + ADP + H(+). Activated by tyrosine and threonine phosphorylation catalyzed by MAP kinase kinase kinases. Its function is as follows. Functions in the let-60 Ras signaling pathway; acts downstream of lin-45 raf kinase, but before the sur-1/mpk-1 gene product in controlling vulval cell differentiation. Required for progression of developing oocytes through the pachytene stage. Plays a role in responses to M.nematophilum-mediated bacterial infection by promoting tail swelling and preventing constipation. Involved in fluid homeostasis. Positively regulates lifespan upstream of mpk-1. This is Dual specificity mitogen-activated protein kinase kinase mek-2 (mek-2) from Caenorhabditis elegans.